Reading from the N-terminus, the 57-residue chain is Small ribosomal subunit protein bS21 (57 aa).

The tract at residues 24–57 (SKSGTLQESRKREFYEKPSVKRKKKSEAARKRKF) is disordered. Residues 31-42 (ESRKREFYEKPS) show a composition bias toward basic and acidic residues. A compositionally biased stretch (basic residues) spans 43–57 (VKRKKKSEAARKRKF).

Belongs to the bacterial ribosomal protein bS21 family.

The chain is Small ribosomal subunit protein bS21 (rpsU) from Listeria innocua serovar 6a (strain ATCC BAA-680 / CLIP 11262).